The sequence spans 357 residues: Membrane-bound lytic murein transglycosylase C (357 aa).

The signal sequence occupies residues Met1–Ser16. Residue Cys17 is the site of N-palmitoyl cysteine attachment. A lipid anchor (S-diacylglycerol cysteine) is attached at Cys17.

The protein belongs to the transglycosylase Slt family.

The protein resides in the cell outer membrane. It catalyses the reaction Exolytic cleavage of the (1-&gt;4)-beta-glycosidic linkage between N-acetylmuramic acid (MurNAc) and N-acetylglucosamine (GlcNAc) residues in peptidoglycan, from either the reducing or the non-reducing ends of the peptidoglycan chains, with concomitant formation of a 1,6-anhydrobond in the MurNAc residue.. Functionally, murein-degrading enzyme. May play a role in recycling of muropeptides during cell elongation and/or cell division. The sequence is that of Membrane-bound lytic murein transglycosylase C from Sodalis glossinidius (strain morsitans).